The primary structure comprises 236 residues: Transcriptional regulatory protein RprY (236 aa).

A Response regulatory domain is found at 9 to 123; that stretch reads RILLCEDDEN…ELTFRIEAIL (115 aa). Residue Asp58 is modified to 4-aspartylphosphate. Positions 134-231 form a DNA-binding region, ompR/PhoB-type; sequence SNVYKIGKFT…IHGKGYKLIT (98 aa).

Post-translationally, phosphorylated by RprX.

It is found in the cytoplasm. Its function is as follows. Member of the two-component regulatory system RprX/RprY. This Bacteroides fragilis (strain YCH46) protein is Transcriptional regulatory protein RprY (rprY).